We begin with the raw amino-acid sequence, 166 residues long: Putative methyltransferase Rv1506c (166 aa).

The protein belongs to the methyltransferase superfamily.

Probably plays a role in host phagosome maturation arrest, as well as a role in the synthesis of acyltrehalose-containing glycolipids. The protein is Putative methyltransferase Rv1506c of Mycobacterium tuberculosis (strain ATCC 25618 / H37Rv).